The following is a 50-amino-acid chain: Defensin D4 (50 aa).

Disulfide bonds link Cys-3/Cys-50, Cys-14/Cys-35, Cys-20/Cys-44, and Cys-24/Cys-46.

Detected in seeds (at protein level).

Its subcellular location is the secreted. In terms of biological role, antimicrobial peptide with antifungal activity. This is Defensin D4 from Nigella sativa (Black cumin).